A 635-amino-acid polypeptide reads, in one-letter code: Endo-1,4-beta-xylanase B (635 aa).

Residues 1–337 (MNLKTAYEPY…KEAYYAVLKA (337 aa)) form the GH10 domain. Glutamate 150 acts as the Proton donor in catalysis. Glutamate 255 acts as the Nucleophile in catalysis.

It belongs to the glycosyl hydrolase 10 (cellulase F) family.

It carries out the reaction Endohydrolysis of (1-&gt;4)-beta-D-xylosidic linkages in xylans.. It participates in glycan degradation; xylan degradation. B.fibrisolvens is located in the rumen of ruminant animals, where it contributes to the animal's digestion of plant material by hydrolyzing hemicellulose with its xylanases. In Butyrivibrio fibrisolvens, this protein is Endo-1,4-beta-xylanase B (xynB).